The following is a 219-amino-acid chain: Octanoyltransferase (219 aa).

Residues 32 to 207 (SSSPDQLWIV…TFSHNLGYQN (176 aa)) enclose the BPL/LPL catalytic domain. Substrate contacts are provided by residues 71–78 (RGGQVTYH), 138–140 (SLG), and 151–153 (GLA). Cys169 serves as the catalytic Acyl-thioester intermediate.

This sequence belongs to the LipB family.

The protein localises to the cytoplasm. The catalysed reaction is octanoyl-[ACP] + L-lysyl-[protein] = N(6)-octanoyl-L-lysyl-[protein] + holo-[ACP] + H(+). It functions in the pathway protein modification; protein lipoylation via endogenous pathway; protein N(6)-(lipoyl)lysine from octanoyl-[acyl-carrier-protein]: step 1/2. Its function is as follows. Catalyzes the transfer of endogenously produced octanoic acid from octanoyl-acyl-carrier-protein onto the lipoyl domains of lipoate-dependent enzymes. Lipoyl-ACP can also act as a substrate although octanoyl-ACP is likely to be the physiological substrate. In Shewanella woodyi (strain ATCC 51908 / MS32), this protein is Octanoyltransferase.